Consider the following 688-residue polypeptide: Polyphosphate kinase (688 aa).

Asparagine 45 is an ATP binding site. Mg(2+) is bound by residues arginine 375 and arginine 405. One can recognise a PLD phosphodiesterase domain in the interval 430-464 (PGLKIHAKLFLISRKEGDDVVRYAHIGTGNFNEKT). The active-site Phosphohistidine intermediate is the histidine 435. Residues tyrosine 468, arginine 564, and histidine 592 each coordinate ATP.

This sequence belongs to the polyphosphate kinase 1 (PPK1) family. Requires Mg(2+) as cofactor. In terms of processing, an intermediate of this reaction is the autophosphorylated ppk in which a phosphate is covalently linked to a histidine residue through a N-P bond.

It catalyses the reaction [phosphate](n) + ATP = [phosphate](n+1) + ADP. Its function is as follows. Catalyzes the reversible transfer of the terminal phosphate of ATP to form a long-chain polyphosphate (polyP). The polypeptide is Polyphosphate kinase (Salmonella typhimurium (strain LT2 / SGSC1412 / ATCC 700720)).